We begin with the raw amino-acid sequence, 726 residues long: Quinolinate synthase, chloroplastic (726 aa).

A chloroplast-targeting transit peptide spans 1 to 67; the sequence is MDAANLVMKS…KKPSNNSTFT (67 aa). Residue Cys133 is the Cysteine persulfide intermediate of the active site. Iminosuccinate contacts are provided by His283 and Ser309. Cys363 contacts [4Fe-4S] cluster. Iminosuccinate-binding positions include 392 to 394 and Ser414; that span reads YIN. A [4Fe-4S] cluster-binding site is contributed by Cys487. Iminosuccinate-binding positions include 513-515 and Thr538; that span reads HFE. Cys643 contacts [4Fe-4S] cluster.

It belongs to the quinolinate synthase family. Type 1 subfamily. Homodimer. The cofactor is [4Fe-4S] cluster.

It is found in the plastid. Its subcellular location is the chloroplast. It catalyses the reaction iminosuccinate + dihydroxyacetone phosphate = quinolinate + phosphate + 2 H2O + H(+). It functions in the pathway alkaloid biosynthesis; nicotine biosynthesis. The protein operates within cofactor biosynthesis; NAD(+) biosynthesis; quinolinate from iminoaspartate: step 1/1. Its function is as follows. Involved in the biosynthesis of pyridine alkaloid natural products, leading mainly to the production of anabasine, anatabine, nicotine and nornicotine, effective deterrents against herbivores with antiparasitic and pesticide properties (neurotoxins); nornicotine serves as the precursor in the synthesis of the carcinogen compound N'-nitrosonornicotine (NNN). Catalyzes the condensation of iminoaspartate with dihydroxyacetone phosphate to form quinolinate. This Nicotiana tabacum (Common tobacco) protein is Quinolinate synthase, chloroplastic.